The primary structure comprises 273 residues: Dermonecrotic toxin SdSicTox-betaIIB1bxiv (273 aa).

The active site involves His4. Glu24 and Asp26 together coordinate Mg(2+). His40 (nucleophile) is an active-site residue. Intrachain disulfides connect Cys44/Cys50 and Cys46/Cys189. Position 84 (Asp84) interacts with Mg(2+).

The protein belongs to the arthropod phospholipase D family. Class II subfamily. Mg(2+) is required as a cofactor. As to expression, expressed by the venom gland.

Its subcellular location is the secreted. The enzyme catalyses an N-(acyl)-sphingosylphosphocholine = an N-(acyl)-sphingosyl-1,3-cyclic phosphate + choline. The catalysed reaction is an N-(acyl)-sphingosylphosphoethanolamine = an N-(acyl)-sphingosyl-1,3-cyclic phosphate + ethanolamine. It catalyses the reaction a 1-acyl-sn-glycero-3-phosphocholine = a 1-acyl-sn-glycero-2,3-cyclic phosphate + choline. It carries out the reaction a 1-acyl-sn-glycero-3-phosphoethanolamine = a 1-acyl-sn-glycero-2,3-cyclic phosphate + ethanolamine. Functionally, dermonecrotic toxins cleave the phosphodiester linkage between the phosphate and headgroup of certain phospholipids (sphingolipid and lysolipid substrates), forming an alcohol (often choline) and a cyclic phosphate. This toxin acts on sphingomyelin (SM). It may also act on ceramide phosphoethanolamine (CPE), lysophosphatidylcholine (LPC) and lysophosphatidylethanolamine (LPE), but not on lysophosphatidylserine (LPS), and lysophosphatidylglycerol (LPG). It acts by transphosphatidylation, releasing exclusively cyclic phosphate products as second products. Induces dermonecrosis, hemolysis, increased vascular permeability, edema, inflammatory response, and platelet aggregation. The sequence is that of Dermonecrotic toxin SdSicTox-betaIIB1bxiv from Sicarius cf. damarensis (strain GJB-2008) (Six-eyed sand spider).